We begin with the raw amino-acid sequence, 349 residues long: Divinyl chlorophyll a/b light-harvesting protein PcbB (349 aa).

Transmembrane regions (helical) follow at residues 27–47, 57–77, 91–113, 201–221, 241–261, and 306–326; these read FIAA…AATL, LPMG…GIGF, IAIL…SVYF, VMGG…FHIA, AILS…AFWA, and LVNV…WHAL.

Belongs to the PsbB/PsbC family. IsiA/Pcb subfamily. As to quaternary structure, the antenna complex consists of divinyl chlorophylls (a and b) and divinyl chlorophyll a/b binding proteins and binds more divinyl chlorophyll b than does the antenna complex from high-light-adapted Prochlorococcus. Requires divinyl chlorophyll a as cofactor. It depends on divinyl chlorophyll b as a cofactor.

It is found in the cellular thylakoid membrane. Functionally, the antenna complex functions as a light receptor, it captures and delivers excitation energy to photosystems II and I. The Prochlorales pcb genes are not related to higher plant LHCs. This Prochlorococcus marinus (strain SARG / CCMP1375 / SS120) protein is Divinyl chlorophyll a/b light-harvesting protein PcbB (pcbB).